A 127-amino-acid chain; its full sequence is DNA-directed RNA polymerase subunit omega (127 aa).

It belongs to the RNA polymerase subunit omega family. As to quaternary structure, the RNAP catalytic core consists of 2 alpha, 1 beta, 1 beta' and 1 omega subunit. When a sigma factor is associated with the core the holoenzyme is formed, which can initiate transcription.

The enzyme catalyses RNA(n) + a ribonucleoside 5'-triphosphate = RNA(n+1) + diphosphate. Promotes RNA polymerase assembly. Latches the N- and C-terminal regions of the beta' subunit thereby facilitating its interaction with the beta and alpha subunits. The chain is DNA-directed RNA polymerase subunit omega from Rickettsia rickettsii (strain Iowa).